The sequence spans 155 residues: Ribosomal RNA large subunit methyltransferase H (155 aa).

S-adenosyl-L-methionine contacts are provided by residues Leu72, Gly103, and 122–127; that span reads LGRMVW.

It belongs to the RNA methyltransferase RlmH family. As to quaternary structure, homodimer.

Its subcellular location is the cytoplasm. It carries out the reaction pseudouridine(1915) in 23S rRNA + S-adenosyl-L-methionine = N(3)-methylpseudouridine(1915) in 23S rRNA + S-adenosyl-L-homocysteine + H(+). In terms of biological role, specifically methylates the pseudouridine at position 1915 (m3Psi1915) in 23S rRNA. The polypeptide is Ribosomal RNA large subunit methyltransferase H (Cereibacter sphaeroides (strain KD131 / KCTC 12085) (Rhodobacter sphaeroides)).